Consider the following 448-residue polypeptide: Glucose-6-phosphate isomerase (448 aa).

E290 functions as the Proton donor in the catalytic mechanism. Catalysis depends on residues H311 and K425.

Belongs to the GPI family.

The protein localises to the cytoplasm. The catalysed reaction is alpha-D-glucose 6-phosphate = beta-D-fructose 6-phosphate. Its pathway is carbohydrate biosynthesis; gluconeogenesis. It functions in the pathway carbohydrate degradation; glycolysis; D-glyceraldehyde 3-phosphate and glycerone phosphate from D-glucose: step 2/4. Catalyzes the reversible isomerization of glucose-6-phosphate to fructose-6-phosphate. This chain is Glucose-6-phosphate isomerase, found in Latilactobacillus sakei subsp. sakei (strain 23K) (Lactobacillus sakei subsp. sakei).